The primary structure comprises 155 residues: Small ribosomal subunit protein uS7 (155 aa).

It belongs to the universal ribosomal protein uS7 family. As to quaternary structure, part of the 30S ribosomal subunit. Contacts proteins S9 and S11.

In terms of biological role, one of the primary rRNA binding proteins, it binds directly to 16S rRNA where it nucleates assembly of the head domain of the 30S subunit. Is located at the subunit interface close to the decoding center, probably blocks exit of the E-site tRNA. The sequence is that of Small ribosomal subunit protein uS7 from Corynebacterium efficiens (strain DSM 44549 / YS-314 / AJ 12310 / JCM 11189 / NBRC 100395).